The following is a 166-amino-acid chain: Urease accessory protein UreE (166 aa).

This sequence belongs to the UreE family.

Its subcellular location is the cytoplasm. Functionally, involved in urease metallocenter assembly. Binds nickel. Probably functions as a nickel donor during metallocenter assembly. This is Urease accessory protein UreE from Pseudomonas savastanoi pv. phaseolicola (strain 1448A / Race 6) (Pseudomonas syringae pv. phaseolicola (strain 1448A / Race 6)).